The chain runs to 151 residues: Ribosome maturation factor RimP (151 aa).

This sequence belongs to the RimP family.

The protein localises to the cytoplasm. Functionally, required for maturation of 30S ribosomal subunits. This chain is Ribosome maturation factor RimP, found in Haemophilus influenzae (strain PittGG).